The following is a 193-amino-acid chain: dTTP/UTP pyrophosphatase (193 aa).

D70 (proton acceptor) is an active-site residue.

Belongs to the Maf family. YhdE subfamily. A divalent metal cation is required as a cofactor.

It localises to the cytoplasm. It carries out the reaction dTTP + H2O = dTMP + diphosphate + H(+). The enzyme catalyses UTP + H2O = UMP + diphosphate + H(+). In terms of biological role, nucleoside triphosphate pyrophosphatase that hydrolyzes dTTP and UTP. May have a dual role in cell division arrest and in preventing the incorporation of modified nucleotides into cellular nucleic acids. The sequence is that of dTTP/UTP pyrophosphatase from Ruminiclostridium cellulolyticum (strain ATCC 35319 / DSM 5812 / JCM 6584 / H10) (Clostridium cellulolyticum).